Reading from the N-terminus, the 246-residue chain is Ribonuclease PH (246 aa).

Phosphate is bound by residues arginine 86 and 124 to 126 (GTR).

This sequence belongs to the RNase PH family. Homohexameric ring arranged as a trimer of dimers.

The enzyme catalyses tRNA(n+1) + phosphate = tRNA(n) + a ribonucleoside 5'-diphosphate. In terms of biological role, phosphorolytic 3'-5' exoribonuclease that plays an important role in tRNA 3'-end maturation. Removes nucleotide residues following the 3'-CCA terminus of tRNAs; can also add nucleotides to the ends of RNA molecules by using nucleoside diphosphates as substrates, but this may not be physiologically important. Probably plays a role in initiation of 16S rRNA degradation (leading to ribosome degradation) during starvation. The polypeptide is Ribonuclease PH (Bacillus licheniformis (strain ATCC 14580 / DSM 13 / JCM 2505 / CCUG 7422 / NBRC 12200 / NCIMB 9375 / NCTC 10341 / NRRL NRS-1264 / Gibson 46)).